We begin with the raw amino-acid sequence, 515 residues long: C-glycoside 3-oxidase (515 aa).

Glutamate 41 contacts FAD. Residues 62-82 (ERAHAQRRSEGPHAREDDDRV) show a composition bias toward basic and acidic residues. The interval 62-90 (ERAHAQRRSEGPHAREDDDRVGGIVKSAQ) is disordered. FAD contacts are provided by serine 118, asparagine 120, methionine 124, threonine 129, alanine 131, and valine 237. Histidine 444 acts as the Proton acceptor in catalysis. FAD contacts are provided by asparagine 478 and threonine 490.

The protein belongs to the GMC oxidoreductase family. Monomer. FAD is required as a cofactor.

The catalysed reaction is isoorientin + O2 = 3''-dehydroisoorientin + H2O2. It carries out the reaction mangiferin + O2 = 3'-dehydromangiferin + H2O2. In terms of biological role, FAD-dependent C-glycoside-metabolizing enzyme that participates in the degradation of certain C-glycosides by catalyzing the oxidation of the hydroxyl group at the C3 position of the sugar moiety. Shows oxidase activity toward C-glycosides such as isoorientin and mangiferin but cannot use carminic acid, puerarin, orientin or aloesin. Shows weak activity (100 to 1000-fold lower) with O-glycosides. Probably plays a crucial role in the metabolism of C-glycosides in nature. The protein is C-glycoside 3-oxidase of Microbacterium trichothecenolyticum (Aureobacterium trichothecenolyticum).